Consider the following 283-residue polypeptide: Thymidylate synthase (283 aa).

R22 provides a ligand contact to dUMP. The active-site Nucleophile is C160. Residues 180–183 (RSCD), N191, and 221–223 (HIY) contribute to the dUMP site. D183 is a (6R)-5,10-methylene-5,6,7,8-tetrahydrofolate binding site. S282 contributes to the (6R)-5,10-methylene-5,6,7,8-tetrahydrofolate binding site.

The protein belongs to the thymidylate synthase family. Bacterial-type ThyA subfamily. In terms of assembly, homodimer.

It is found in the cytoplasm. It carries out the reaction dUMP + (6R)-5,10-methylene-5,6,7,8-tetrahydrofolate = 7,8-dihydrofolate + dTMP. It functions in the pathway pyrimidine metabolism; dTTP biosynthesis. Functionally, catalyzes the reductive methylation of 2'-deoxyuridine-5'-monophosphate (dUMP) to 2'-deoxythymidine-5'-monophosphate (dTMP) while utilizing 5,10-methylenetetrahydrofolate (mTHF) as the methyl donor and reductant in the reaction, yielding dihydrofolate (DHF) as a by-product. This enzymatic reaction provides an intracellular de novo source of dTMP, an essential precursor for DNA biosynthesis. The sequence is that of Thymidylate synthase from Vibrio vulnificus (strain CMCP6).